The following is a 155-amino-acid chain: Small ribosomal subunit protein uS7 (155 aa).

The protein belongs to the universal ribosomal protein uS7 family. In terms of assembly, part of the 30S ribosomal subunit. Contacts proteins S9 and S11.

One of the primary rRNA binding proteins, it binds directly to 16S rRNA where it nucleates assembly of the head domain of the 30S subunit. Is located at the subunit interface close to the decoding center, probably blocks exit of the E-site tRNA. This is Small ribosomal subunit protein uS7 from Chlorobium limicola (strain DSM 245 / NBRC 103803 / 6330).